The following is a 357-amino-acid chain: Dihydroflavonol 4-reductase (357 aa).

Residues lysine 49 and tyrosine 168 each coordinate NADP(+).

This sequence belongs to the NAD(P)-dependent epimerase/dehydratase family. Dihydroflavonol-4-reductase subfamily.

The catalysed reaction is a (2R,3S,4S)-leucoanthocyanidin + NADP(+) = a (2R,3R)-dihydroflavonol + NADPH + H(+). It carries out the reaction (2S)-flavan-4-ol + NADP(+) = (2S)-flavanone + NADPH + H(+). Its pathway is pigment biosynthesis; anthocyanin biosynthesis. Its function is as follows. Bifunctional enzyme involved in flavonoid metabolism. This is Dihydroflavonol 4-reductase (A1) from Zea mays (Maize).